A 473-amino-acid polypeptide reads, in one-letter code: UDP-glycosyltransferase 71A27 (473 aa).

The active-site Proton acceptor is His-15. His-15 contacts an anthocyanidin. The Charge relay role is filled by Asp-117. UDP-alpha-D-glucose contacts are provided by Ala-345, Gln-347, His-362, Trp-365, Asn-366, Ser-367, and Glu-370. Gly-385 contacts an anthocyanidin. UDP-alpha-D-glucose contacts are provided by Glu-386 and Gln-387.

It belongs to the UDP-glycosyltransferase family.

The enzyme catalyses (20S)-protopanaxadiol + UDP-alpha-D-glucose = (20S)-ginsenoside C-K + UDP + H(+). It functions in the pathway secondary metabolite biosynthesis; terpenoid biosynthesis. Component of the triterpene saponins (e.g. PPD-type ginsenosides or panaxosides) biosynthetic pathways. Glycosyltransferase that catalyzes the biosynthesis of compound K from protopanaxadiol (PPD). This chain is UDP-glycosyltransferase 71A27, found in Panax ginseng (Korean ginseng).